The following is a 231-amino-acid chain: L-ribulose-5-phosphate 4-epimerase (231 aa).

Substrate is bound by residues 27 to 28 (GN), 44 to 45 (SG), and 74 to 75 (SS). Positions 76, 95, and 97 each coordinate Zn(2+). Catalysis depends on aspartate 120, which acts as the Proton donor/acceptor. Zn(2+) is bound at residue histidine 171. The active-site Proton donor/acceptor is the tyrosine 229.

It belongs to the aldolase class II family. AraD/FucA subfamily. In terms of assembly, homotetramer. The cofactor is Zn(2+).

It catalyses the reaction L-ribulose 5-phosphate = D-xylulose 5-phosphate. The protein operates within carbohydrate degradation; L-arabinose degradation via L-ribulose; D-xylulose 5-phosphate from L-arabinose (bacterial route): step 3/3. Functionally, involved in the degradation of L-arabinose. Catalyzes the interconversion of L-ribulose 5-phosphate (LRu5P) and D-xylulose 5-phosphate (D-Xu5P) via a retroaldol/aldol mechanism (carbon-carbon bond cleavage analogous to a class II aldolase reaction). The chain is L-ribulose-5-phosphate 4-epimerase from Salmonella typhimurium (strain LT2 / SGSC1412 / ATCC 700720).